The chain runs to 430 residues: ATP-dependent RNA helicase RhlB (430 aa).

The Q motif motif lies at 9-37 (QKFSDFALHPQVIEALETKGFHNCTPIQA). Residues 40–219 (LPFTLSGRDV…FENMNNAEYV (180 aa)) enclose the Helicase ATP-binding domain. Position 53-60 (53-60 (AQTGTGKT)) interacts with ATP. The DEAD box signature appears at 165–168 (DEAD). The 146-residue stretch at 245–390 (RLLQTLIEEE…VSRYNSDALM (146 aa)) folds into the Helicase C-terminal domain. The interval 388–430 (ALMTDLPPPKRLTRNRSGNGPRRGGNNNRRSSASRSPNRKRSG) is disordered. Low complexity predominate over residues 402–423 (NRSGNGPRRGGNNNRRSSASRS).

It belongs to the DEAD box helicase family. RhlB subfamily. Component of the RNA degradosome, which is a multiprotein complex involved in RNA processing and mRNA degradation.

The protein resides in the cytoplasm. It catalyses the reaction ATP + H2O = ADP + phosphate + H(+). DEAD-box RNA helicase involved in RNA degradation. Has RNA-dependent ATPase activity and unwinds double-stranded RNA. The polypeptide is ATP-dependent RNA helicase RhlB (Erwinia tasmaniensis (strain DSM 17950 / CFBP 7177 / CIP 109463 / NCPPB 4357 / Et1/99)).